The following is a 313-amino-acid chain: Methionyl-tRNA formyltransferase (313 aa).

113 to 116 (SLLP) is a binding site for (6S)-5,6,7,8-tetrahydrofolate.

The protein belongs to the Fmt family.

It carries out the reaction L-methionyl-tRNA(fMet) + (6R)-10-formyltetrahydrofolate = N-formyl-L-methionyl-tRNA(fMet) + (6S)-5,6,7,8-tetrahydrofolate + H(+). Functionally, attaches a formyl group to the free amino group of methionyl-tRNA(fMet). The formyl group appears to play a dual role in the initiator identity of N-formylmethionyl-tRNA by promoting its recognition by IF2 and preventing the misappropriation of this tRNA by the elongation apparatus. This is Methionyl-tRNA formyltransferase from Francisella tularensis subsp. holarctica (strain FTNF002-00 / FTA).